The primary structure comprises 135 residues: Ribosome-binding factor A (135 aa).

Belongs to the RbfA family. As to quaternary structure, monomer. Binds 30S ribosomal subunits, but not 50S ribosomal subunits or 70S ribosomes.

Its subcellular location is the cytoplasm. In terms of biological role, one of several proteins that assist in the late maturation steps of the functional core of the 30S ribosomal subunit. Associates with free 30S ribosomal subunits (but not with 30S subunits that are part of 70S ribosomes or polysomes). Required for efficient processing of 16S rRNA. May interact with the 5'-terminal helix region of 16S rRNA. The sequence is that of Ribosome-binding factor A from Bartonella henselae (strain ATCC 49882 / DSM 28221 / CCUG 30454 / Houston 1) (Rochalimaea henselae).